The chain runs to 435 residues: Iron(III) enterobactin esterase (435 aa).

It belongs to the Fes family.

The protein resides in the cytoplasm. The enzyme catalyses Fe(III)-enterobactin + 3 H2O + H(+) = Fe(III)-[N-(2,3-dihydroxybenzoyl)-L-serine] + 2 N-(2,3-dihydroxybenzoyl)-L-serine. It catalyses the reaction Fe(III)-enterobactin + H2O = Fe(III)-[N-(2,3-dihydroxybenzoyl)-L-serine]3 + H(+). The catalysed reaction is Fe(III)-[N-(2,3-dihydroxybenzoyl)-L-serine]3 + H2O + H(+) = Fe(III)-[N-(2,3-dihydroxybenzoyl)-L-serine]2 + N-(2,3-dihydroxybenzoyl)-L-serine. It carries out the reaction Fe(III)-[N-(2,3-dihydroxybenzoyl)-L-serine]2 + H2O + H(+) = Fe(III)-[N-(2,3-dihydroxybenzoyl)-L-serine] + N-(2,3-dihydroxybenzoyl)-L-serine. Its function is as follows. Catalyzes the hydrolysis of ferric enterobactin (Fe-Ent). Is responsible for the release of iron from ferric enterobactin. This chain is Iron(III) enterobactin esterase (fes), found in Dickeya dadantii (strain 3937) (Erwinia chrysanthemi (strain 3937)).